A 340-amino-acid polypeptide reads, in one-letter code: Ketol-acid reductoisomerase (NADP(+)) (340 aa).

Positions 1-182 (MRVYYDRDCD…GGGRSGIIET (182 aa)) constitute a KARI N-terminal Rossmann domain. NADP(+) is bound by residues 24-27 (YGSQ), arginine 48, serine 51, serine 53, and 83-86 (DELQ). Residue histidine 108 is part of the active site. Glycine 134 contacts NADP(+). One can recognise a KARI C-terminal knotted domain in the interval 183–329 (NFRQECETDL…EKLRGMMPWI (147 aa)). 4 residues coordinate Mg(2+): aspartate 191, glutamate 195, glutamate 227, and glutamate 231. Position 252 (serine 252) interacts with substrate.

This sequence belongs to the ketol-acid reductoisomerase family. Mg(2+) serves as cofactor.

The catalysed reaction is (2R)-2,3-dihydroxy-3-methylbutanoate + NADP(+) = (2S)-2-acetolactate + NADPH + H(+). The enzyme catalyses (2R,3R)-2,3-dihydroxy-3-methylpentanoate + NADP(+) = (S)-2-ethyl-2-hydroxy-3-oxobutanoate + NADPH + H(+). The protein operates within amino-acid biosynthesis; L-isoleucine biosynthesis; L-isoleucine from 2-oxobutanoate: step 2/4. It functions in the pathway amino-acid biosynthesis; L-valine biosynthesis; L-valine from pyruvate: step 2/4. In terms of biological role, involved in the biosynthesis of branched-chain amino acids (BCAA). Catalyzes an alkyl-migration followed by a ketol-acid reduction of (S)-2-acetolactate (S2AL) to yield (R)-2,3-dihydroxy-isovalerate. In the isomerase reaction, S2AL is rearranged via a Mg-dependent methyl migration to produce 3-hydroxy-3-methyl-2-ketobutyrate (HMKB). In the reductase reaction, this 2-ketoacid undergoes a metal-dependent reduction by NADPH to yield (R)-2,3-dihydroxy-isovalerate. This Cereibacter sphaeroides (strain ATCC 17023 / DSM 158 / JCM 6121 / CCUG 31486 / LMG 2827 / NBRC 12203 / NCIMB 8253 / ATH 2.4.1.) (Rhodobacter sphaeroides) protein is Ketol-acid reductoisomerase (NADP(+)).